The chain runs to 281 residues: MPELPEVETVRRGLQPHLEGRVIARAEARRPDLRWPLPPDLVQVLTGARVVALRRRSKYILAELEDRGSLLLHLGMSGRMLIEGESQGDFHRDPAILPRHDHVVLWNDQGTRITFNDARRFGMVDLVPPGAEHPLLAHLGPEPLSDAFTAEALAAAFAGRRMPVKAALLDQRIVAGLGNIYVSEALYRAGIDPRRLAGAVTAPEVAALVGHVRAVLEEAIAAGGSSLRDHRQATGELGYFQHSFRVYGREGAPCPTPGCTGTVQRIVQSGRSSFFCPLCQQ.

The Schiff-base intermediate with DNA role is filled by proline 2. The active-site Proton donor is glutamate 3. Residue lysine 58 is the Proton donor; for beta-elimination activity of the active site. DNA contacts are provided by histidine 100, arginine 119, and arginine 160. An FPG-type zinc finger spans residues 245-281 (RVYGREGAPCPTPGCTGTVQRIVQSGRSSFFCPLCQQ). Arginine 271 functions as the Proton donor; for delta-elimination activity in the catalytic mechanism.

This sequence belongs to the FPG family. In terms of assembly, monomer. Zn(2+) serves as cofactor.

The catalysed reaction is Hydrolysis of DNA containing ring-opened 7-methylguanine residues, releasing 2,6-diamino-4-hydroxy-5-(N-methyl)formamidopyrimidine.. It carries out the reaction 2'-deoxyribonucleotide-(2'-deoxyribose 5'-phosphate)-2'-deoxyribonucleotide-DNA = a 3'-end 2'-deoxyribonucleotide-(2,3-dehydro-2,3-deoxyribose 5'-phosphate)-DNA + a 5'-end 5'-phospho-2'-deoxyribonucleoside-DNA + H(+). Functionally, involved in base excision repair of DNA damaged by oxidation or by mutagenic agents. Acts as a DNA glycosylase that recognizes and removes damaged bases. Has a preference for oxidized purines, such as 7,8-dihydro-8-oxoguanine (8-oxoG). Has AP (apurinic/apyrimidinic) lyase activity and introduces nicks in the DNA strand. Cleaves the DNA backbone by beta-delta elimination to generate a single-strand break at the site of the removed base with both 3'- and 5'-phosphates. The protein is Formamidopyrimidine-DNA glycosylase of Paracoccus denitrificans (strain Pd 1222).